Consider the following 518-residue polypeptide: Sugar transport protein MST3 (518 aa).

The Cytoplasmic portion of the chain corresponds to 1–18; that stretch reads MAGGAVVSTGAGKDYPGK. Residues 19–39 traverse the membrane as a helical segment; that stretch reads LTLFVFFTCVVAATGGLIFGY. Topologically, residues 40 to 80 are extracellular; the sequence is DIGISGGVTSMDPFLRKFFPEVYRKKQMADKNNQYCKYDNQ. Residues 81-101 traverse the membrane as a helical segment; that stretch reads LLQTFTSSLYLAALVSSFFAA. At 102–117 the chain is on the cytoplasmic side; it reads TVTRVLGRKWSMFAGG. The chain crosses the membrane as a helical span at residues 118–138; it reads LTFLIGAALNGAAENVAMLIV. The Extracellular portion of the chain corresponds to 139–140; that stretch reads GR. The helical transmembrane segment at 141–161 threads the bilayer; it reads ILLGVGVGFANQSVPVYLSEM. The Cytoplasmic portion of the chain corresponds to 162 to 167; sequence APARLR. Residues 168–188 traverse the membrane as a helical segment; the sequence is GMLNIGFQLMITIGILAAELI. The Extracellular portion of the chain corresponds to 189 to 202; sequence NYGTAKIKAGWGWR. A helical transmembrane segment spans residues 203 to 223; the sequence is VSLALAAVPAAIITLGSLFLP. At 224–290 the chain is on the cytoplasmic side; that stretch reads DTPNSLIDRG…YRAQLTMAIC (67 aa). The chain crosses the membrane as a helical span at residues 291-311; that stretch reads IPFFQQLTGINVIMFYAPVLF. The Extracellular segment spans residues 312–322; sequence DTLGFKSDASL. A helical membrane pass occupies residues 323 to 343; it reads MSAVITGLVNVFATLVSIFTV. Topologically, residues 344–351 are cytoplasmic; sequence DRLGRRKL. Residues 352-372 form a helical membrane-spanning segment; sequence FLQGGAQMVVCQVVVGTLIAV. The Extracellular portion of the chain corresponds to 373 to 387; that stretch reads KFGTSGIGDIPKGYA. A helical transmembrane segment spans residues 388-408; sequence AVVVLFICMYVAGFAWSWGPL. Residues 409-427 lie on the Cytoplasmic side of the membrane; sequence GWLVPSEIFPLEIRPAGQS. Residues 428–448 form a helical membrane-spanning segment; the sequence is INVSVNMLFTFVIAQAFLTML. Over 449–452 the chain is Extracellular; it reads CHMK. The helical transmembrane segment at 453-473 threads the bilayer; it reads FGLFYFFAGWVVIMTVFIALF. Residues 474–518 are Cytoplasmic-facing; sequence LPETKNVPIEEMVLVWKSHWFWRRFIGDHDVHVGANHVSNNKLQP.

Belongs to the major facilitator superfamily. Sugar transporter (TC 2.A.1.1) family. Highly expressed in roots. Expressed in xylem and sclerenchyma cells of roots. Expressed at low levels in leaves.

It is found in the membrane. Functionally, mediates active uptake of hexoses by sugar:proton symport. Can transport glucose, xylose and 3-O-methylglucose. May be involved in the accumulation of monosaccharides required for cell wall synthesis during root development. This is Sugar transport protein MST3 from Oryza sativa subsp. japonica (Rice).